An 89-amino-acid chain; its full sequence is Small ribosomal subunit protein uS15 (89 aa).

It belongs to the universal ribosomal protein uS15 family. As to quaternary structure, part of the 30S ribosomal subunit. Forms a bridge to the 50S subunit in the 70S ribosome, contacting the 23S rRNA.

One of the primary rRNA binding proteins, it binds directly to 16S rRNA where it helps nucleate assembly of the platform of the 30S subunit by binding and bridging several RNA helices of the 16S rRNA. Its function is as follows. Forms an intersubunit bridge (bridge B4) with the 23S rRNA of the 50S subunit in the ribosome. This Marinomonas sp. (strain MWYL1) protein is Small ribosomal subunit protein uS15.